The chain runs to 392 residues: Tryptophan synthase beta chain 1 (392 aa).

N6-(pyridoxal phosphate)lysine is present on K85.

It belongs to the TrpB family. In terms of assembly, tetramer of two alpha and two beta chains. It depends on pyridoxal 5'-phosphate as a cofactor.

It carries out the reaction (1S,2R)-1-C-(indol-3-yl)glycerol 3-phosphate + L-serine = D-glyceraldehyde 3-phosphate + L-tryptophan + H2O. Its pathway is amino-acid biosynthesis; L-tryptophan biosynthesis; L-tryptophan from chorismate: step 5/5. Its function is as follows. The beta subunit is responsible for the synthesis of L-tryptophan from indole and L-serine. The polypeptide is Tryptophan synthase beta chain 1 (trpB1) (Methanothermobacter thermautotrophicus (strain ATCC 29096 / DSM 1053 / JCM 10044 / NBRC 100330 / Delta H) (Methanobacterium thermoautotrophicum)).